Reading from the N-terminus, the 362-residue chain is O-methyltransferase 13 (362 aa).

5 residues coordinate S-adenosyl-L-homocysteine: S181, G205, D228, D248, and K262. Position 228 (D228) interacts with S-adenosyl-L-methionine. H266 serves as the catalytic Proton acceptor.

The protein belongs to the class I-like SAM-binding methyltransferase superfamily. Cation-independent O-methyltransferase family. In terms of assembly, homodimer. In terms of tissue distribution, mainly expressed in vascular and cortical tissues.

The enzyme catalyses dopamine + S-adenosyl-L-methionine = 3-methoxytyramine + S-adenosyl-L-homocysteine + H(+). It participates in aromatic compound metabolism. Its pathway is alkaloid biosynthesis. Its function is as follows. O-methyltransferase participating in the biosynthesis of natural products derived from phenylethylamine, including mescaline, a natural hallucinogen potentially used in psychotherapeutic treatments. Catalyzes the O-methylation of dopamine and 4,5-dihydroxy-3-methoxyphenethylamine. The polypeptide is O-methyltransferase 13 (Lophophora williamsii (Peyote)).